The primary structure comprises 543 residues: CTP synthase (543 aa).

The segment at M1–L265 is amidoligase domain. S13 contributes to the CTP binding site. A UTP-binding site is contributed by S13. ATP-binding positions include S14 to I19 and D71. Residues D71 and E139 each contribute to the Mg(2+) site. CTP-binding positions include D146 to E148, K186 to Q191, and K222. UTP-binding positions include K186–Q191 and K222. K238 to A240 is a binding site for ATP. A Glutamine amidotransferase type-1 domain is found at T290 to N541. An L-glutamine-binding site is contributed by G351. The Nucleophile; for glutamine hydrolysis role is filled by C378. L-glutamine is bound by residues L379–Q382, E402, and R469. Catalysis depends on residues H514 and E516.

It belongs to the CTP synthase family. Homotetramer.

It carries out the reaction UTP + L-glutamine + ATP + H2O = CTP + L-glutamate + ADP + phosphate + 2 H(+). The enzyme catalyses L-glutamine + H2O = L-glutamate + NH4(+). It catalyses the reaction UTP + NH4(+) + ATP = CTP + ADP + phosphate + 2 H(+). Its pathway is pyrimidine metabolism; CTP biosynthesis via de novo pathway; CTP from UDP: step 2/2. Its activity is regulated as follows. Allosterically activated by GTP, when glutamine is the substrate; GTP has no effect on the reaction when ammonia is the substrate. The allosteric effector GTP functions by stabilizing the protein conformation that binds the tetrahedral intermediate(s) formed during glutamine hydrolysis. Inhibited by the product CTP, via allosteric rather than competitive inhibition. Its function is as follows. Catalyzes the ATP-dependent amination of UTP to CTP with either L-glutamine or ammonia as the source of nitrogen. Regulates intracellular CTP levels through interactions with the four ribonucleotide triphosphates. The chain is CTP synthase from Pseudoalteromonas atlantica (strain T6c / ATCC BAA-1087).